Here is a 242-residue protein sequence, read N- to C-terminus: Probable transcriptional regulatory protein PG_0097 (242 aa).

Belongs to the TACO1 family.

Its subcellular location is the cytoplasm. In Porphyromonas gingivalis (strain ATCC BAA-308 / W83), this protein is Probable transcriptional regulatory protein PG_0097.